Consider the following 240-residue polypeptide: Sorting nexin-3 (240 aa).

Residues 1–85 (MSAYPQDTYF…PPVQVTHSPF (85 aa)) form a disordered region. Over residues 22 to 33 (YQPPPQPQPQQP) the composition is skewed to pro residues. 2 stretches are compositionally biased toward low complexity: residues 34-54 (PYQQ…QPYQ) and 62-84 (QQSP…THSP). A PX domain is found at 118–235 (SFLEIEIRNP…CAFLQDPAWD (118 aa)). Arginine 161, serine 163, lysine 187, arginine 192, and arginine 201 together coordinate a 1,2-diacyl-sn-glycero-3-phospho-(1D-myo-inositol-3-phosphate).

The protein belongs to the sorting nexin family.

It is found in the cytoplasm. The protein localises to the golgi apparatus membrane. It localises to the prevacuolar compartment membrane. Its function is as follows. Required for retention of late Golgi membrane proteins. Component of the retrieval machinery that functions by direct interaction with the cytosolic tails of certain TGN membrane proteins during the sorting/budding process at the prevacuolar compartment. Binds phosphatidylinositol 3-phosphate (PtdIns(P3)). In Cryptococcus neoformans var. neoformans serotype D (strain JEC21 / ATCC MYA-565) (Filobasidiella neoformans), this protein is Sorting nexin-3 (SNX3).